The chain runs to 393 residues: Probable RNA methyltransferase sce3898 (393 aa).

The active-site Proton acceptor is the Glu-82. Residues 90-329 (RPGRYSACVS…VRSARLDAFR (240 aa)) form the Radical SAM core domain. Residues Cys-97 and Cys-353 are joined by a disulfide bond. The [4Fe-4S] cluster site is built by Cys-104, Cys-108, and Cys-111. Residues 157–158 (GE), 212–214 (SLG), and Asn-294 each bind S-adenosyl-L-methionine. Residue Cys-353 is the S-methylcysteine intermediate of the active site. The disordered stretch occupies residues 357–393 (ARPSAEAQRPGGRRAPPRPGATAGAADVGPSAPPRPA). The segment covering 373–382 (PRPGATAGAA) has biased composition (low complexity).

Belongs to the radical SAM superfamily. RlmN family. Requires [4Fe-4S] cluster as cofactor.

It localises to the cytoplasm. The sequence is that of Probable RNA methyltransferase sce3898 from Sorangium cellulosum (strain So ce56) (Polyangium cellulosum (strain So ce56)).